Consider the following 342-residue polypeptide: (Lyso)-N-acylphosphatidylethanolamine lipase (342 aa).

In terms of domain architecture, AB hydrolase-1 spans 70 to 201; the sequence is PLVMVHGFGG…KAVASVLGRS (132 aa).

Belongs to the peptidase S33 family. ABHD4/ABHD5 subfamily.

It carries out the reaction N-hexadecanoyl-1,2-di-(9Z-octadecenoyl)-sn-glycero-3-phosphoethanolamine + H2O = N-hexadecanoyl-1-(9Z-octadecenoyl)-sn-glycero-3-phosphoethanolamine + (9Z)-octadecenoate + H(+). It catalyses the reaction an N-acyl-1,2-diacyl-sn-glycero-3-phosphoethanolamine + H2O = N,1-diacyl-sn-glycero-3-phosphoethanolamine + a fatty acid + H(+). The enzyme catalyses N-hexadecanoyl-1-(9Z-octadecenoyl)-sn-glycero-3-phosphoethanolamine + H2O = N-hexadecanoyl-sn-glycero-3-phosphoethanolamine + (9Z)-octadecenoate + H(+). The catalysed reaction is N-octadecanoyl-1-(9Z-octadecenoyl)-sn-glycero-3-phosphoethanolamine + H2O = N-octadecanoyl-sn-glycero-3-phospho-ethanolamine + (9Z)-octadecenoate + H(+). It carries out the reaction N-eicosanoyl-1-(9Z-octadecenoyl)-sn-glycero-3-phosphoethanolamine + H2O = N-eicosanoyl-sn-glycero-3-phosphoethanolamine + (9Z)-octadecenoate + H(+). It catalyses the reaction N,1-di-(9Z-octadecenoyl)-sn-glycero-3-phosphoethanolamine + H2O = N-(9Z-octadecenoyl)-sn-glycero-3-phosphoethanolamine + (9Z)-octadecenoate + H(+). The enzyme catalyses N-(5Z,8Z,11Z,14Z-eicosatetraenoyl)-1-(9Z-octadecenoyl)-sn-glycero-3-phosphoethanolamine + H2O = N-(5Z,8Z,11Z,14Z-eicosatetraenoyl)-sn-glycero-3-phosphoethanolamine + (9Z)-octadecenoate + H(+). The catalysed reaction is 1-octadecanoyl-2-(9Z-octadecenoyl)-sn-glycero-3-phospho-(N-hexadecanoyl)-serine + H2O = 1-octadecanoyl-2-hydroxy-sn-glycero-3-phospho-(N-hexadecanoyl)-serine + (9Z)-octadecenoate + H(+). It carries out the reaction 1-O-(1Z-octadecenoyl)-2-(9Z-octadecenoyl)-sn-glycero-3-phospho-N-hexadecanoyl-ethanolamine + H2O = 1-O-(1Z-octadecenyl)-sn-glycero-3-phospho-N-hexadecanoyl-ethanolamine + (9Z)-octadecenoate + H(+). It catalyses the reaction N,1-diacyl-sn-glycero-3-phosphoethanolamine + H2O = N-acyl-sn-glycero-3-phosphoethanolamine + a fatty acid + H(+). Functionally, lysophospholipase selective for N-acyl phosphatidylethanolamine (NAPE). Contributes to the biosynthesis of N-acyl ethanolamines, including the endocannabinoid anandamide by hydrolyzing the sn-1 and sn-2 acyl chains from N-acyl phosphatidylethanolamine (NAPE) generating glycerophospho-N-acyl ethanolamine (GP-NAE), an intermediate for N-acyl ethanolamine biosynthesis. Hydrolyzes substrates bearing saturated, monounsaturated, polyunsaturated N-acyl chains. Shows no significant activity towards other lysophospholipids, including lysophosphatidylcholine, lysophosphatidylethanolamine and lysophosphatidylserine. This chain is (Lyso)-N-acylphosphatidylethanolamine lipase, found in Homo sapiens (Human).